The following is a 125-amino-acid chain: Prefoldin subunit beta (125 aa).

It belongs to the prefoldin subunit beta family. As to quaternary structure, heterohexamer of two alpha and four beta subunits.

The protein localises to the cytoplasm. Functionally, molecular chaperone capable of stabilizing a range of proteins. Seems to fulfill an ATP-independent, HSP70-like function in archaeal de novo protein folding. The polypeptide is Prefoldin subunit beta (Pyrobaculum calidifontis (strain DSM 21063 / JCM 11548 / VA1)).